The following is a 379-amino-acid chain: Chaperone protein DnaJ (379 aa).

The J domain occupies 4 to 69; it reads DLYETLGVQK…QKRAAYDRYG (66 aa). A CR-type zinc finger spans residues 137–215; sequence GKTAQIRVPT…CHGQGRVVEE (79 aa). Residues C150, C153, C167, C170, C189, C192, C203, and C206 each contribute to the Zn(2+) site. CXXCXGXG motif repeat units follow at residues 150–157, 167–174, 189–196, and 203–210; these read CDVCTGTG, CGTCQGTG, CPTCGGRG, and CTKCHGQG.

Belongs to the DnaJ family. Homodimer. Zn(2+) serves as cofactor.

The protein resides in the cytoplasm. In terms of biological role, participates actively in the response to hyperosmotic and heat shock by preventing the aggregation of stress-denatured proteins and by disaggregating proteins, also in an autonomous, DnaK-independent fashion. Unfolded proteins bind initially to DnaJ; upon interaction with the DnaJ-bound protein, DnaK hydrolyzes its bound ATP, resulting in the formation of a stable complex. GrpE releases ADP from DnaK; ATP binding to DnaK triggers the release of the substrate protein, thus completing the reaction cycle. Several rounds of ATP-dependent interactions between DnaJ, DnaK and GrpE are required for fully efficient folding. Also involved, together with DnaK and GrpE, in the DNA replication of plasmids through activation of initiation proteins. The protein is Chaperone protein DnaJ of Rhizobium meliloti (strain 1021) (Ensifer meliloti).